The primary structure comprises 483 residues: ATP-dependent RNA helicase dbp-5 (483 aa).

The tract at residues 1–47 (MADLASRITKPDEAPAAAPEAAPVSAPASEEPKAPENETSIEESQSN) is disordered. Over residues 14-29 (APAAAPEAAPVSAPAS) the composition is skewed to low complexity. Residues 74–102 (SSFDELGLPEAVNRGLLAINFKKPSKVQE) carry the Q motif motif. In terms of domain architecture, Helicase ATP-binding spans 107–276 (LMLSDPPRNM…ERFAPNANQM (170 aa)). ATP is bound at residue 120-127 (SQSGTGKT). The DEAD box motif lies at 223–226 (DEAD). The 152-residue stretch at 304–455 (ILCKLYGLMT…LIQLNPNDLD (152 aa)) folds into the Helicase C-terminal domain.

This sequence belongs to the DEAD box helicase family. DDX19/DBP5 subfamily. Associates with the nuclear pore complex.

Its subcellular location is the cytoplasm. The protein resides in the nucleus. It is found in the nuclear pore complex. It localises to the nucleus membrane. The catalysed reaction is ATP + H2O = ADP + phosphate + H(+). Its function is as follows. ATP-dependent RNA helicase associated with the nuclear pore complex and essential for mRNA export from the nucleus. May participate in a terminal step of mRNA export through the removal of proteins that accompany mRNA through the nucleopore complex. May also be involved in early transcription. The sequence is that of ATP-dependent RNA helicase dbp-5 (dbp-5) from Neurospora crassa (strain ATCC 24698 / 74-OR23-1A / CBS 708.71 / DSM 1257 / FGSC 987).